A 2144-amino-acid polypeptide reads, in one-letter code: EDQVSYTLAITARDNGIPQKSDTTYLEILVNDVNDNAPQFLRDSYQGSVYEDVPPFTSVLQISATDRDSGLNGRVFYTFQGGDDGDGDFIVESTSGIVRTLRRLDRENVAQYILRAYAVDKGMPPARTPMEVTVTVLDVNDNPPVFEQDEFDVFVEENSPIGLAVARVTATDPDEGTNAQIMYQIVEGNIPEVFQLDIFSGELTALVDLDYEDRPEYILVIQATSAPLVSRATVHVRLLDRNDNPPVLGNFEILFNNYVTNRSSSFPGGAIGRVPAHDPDISDSLTYSFERGNELSLVLLNASTGELRLSRALDNNRPLEAIMSVLVSDGVHSVTAQCSLRVTIITDEMLTHSITLRLEDMSPERFLSPLLGLFIQAVAATLATPPDHVVVFNVQRDTDAPGGHILNVSLSVGQPPGPGGGPPFLPSEDLQERLYLNRSLLTAISAQRVLPFDDNICLREPCENYMRCVSVLRFDSSAPFIASSSVLFRPIHPVGGLRCRCPPGFTGDYCETEVDLCYSRPCGPHGHCRSREGGYTCLCRDGYTGEHCEVSARSGRCTPGVCKNGGTCVNLLVGGFKCDCPSGDFEKPFCQVTTRSFPARSFITFRGLRQRFHFTLALSFATKERDGLLLYNGRFNEKHDFVALEVIQEQVQLTFSAGESTTTVSPFVPGGVSDGQWHTVQLKYYNKPLLGQTGLPQGPSEQKVAVVSVDGCDTGVALRFGAMLGNYSCAAQGTQGGSKKSLDLTGPLLLGGVPDLPESFPVRMRHFVGCMKNLQVDSRHVDMADFIANNGTVPGCPTKKNVCDSNTCHNGGTCVNQWDAFSCECPLGFGGKSCAQEMANPQRFLGSSLVAWHGLSLPISQPWHLSLMFRTRQADGVLLQAVTRGRSTITLQLRAGHVVLSVEGTGLQASSLRLEPGRANDGDWHHAQLSLGASGGPGHAILSFDYGQQKAEGNLGPRLHGLHLSNMTVGGVPGPASSVARGFRGCLQGVRVSETPEGVSSLDPSRGESINVEPGCSWPDPCDSNPCPTNSYCSNDWDSYSCSCDPGYYGDNCTNVCDLNPCEHQSACTRKPSAPHGYICECLPNYLGPYCETRIDQPCPRGWWGHPTCGPCNCDVSKGFDPDCNKTSGECHCKENHYRPPSSPTCLLCDCYPTGSLSRVCDPEDGQCPCKPGVIGRQCDRCDNPFAEVTTNGCEVNYDSCPRAIEAGIWWPRTRFGLPAAAPCPKGSFGTAVRHCDEHRGWLPPNLFNCTSVTFSELKGFAERLQRNESGLDSGRSQRLALLLRNATQHTSGYFGSDVKVAYQLATRLLAHESAQRGFGLSATQDVHFTENLLRVGSALLDAANKRHWELIQQTEGGTAWLLQHYEAYASALAQNMRHTYLSPFTIVTPNIVISVVRLDKGNFAGTKLPRYEALRGERPPDLETTVILPESVFREMPPMVRSAGPGEAQETEELARRQRRHPELSQGEAVASVIIYHTLAGLLPHNYDPDKRSLRVPKRPVINTPVVSISVHDDEELLPRALDKPVTVQFRLLETEERTKPICVFWNHSILVSGTGGWSARGCEVVFRNESHVSCQCNHMTSFAVLMDVSRRENGEILPLKTLTYVALGVTLAALMITFLFLTLLRALRSNQHGIRRNLTAALGLAQLVFLLGINQADLPFACTVIAILLHFLYLCTFSWALLEALHLYRALTEVRDVNASPMRFYYMLGWGVPAFITGLAVGLDPEGYGNPDFCWLSIYDTLIWSFAGPVAFAVSMSVFLYILSARASCAAQRQGFEKKGPVSGLRSSFTVLLLLSATWLLALLSVNSDTLLFHYLFAACNCVQGPFIFLSYVVLSKEVRKALKFACSRKPSPDPALTTKSTLTSSYNCPSPYADGRLYQPYGDSAGSLHSASRSGKSQPSYIPFLLREESTLNPGQVPPGLGDPSGLFMEGQAQQHDPDTDSDSDLSLEDDQSGSYASTHSSDSEEEEEEAAFPGEQGWDSLLGPGAERLPLHSTPKDGGPGSGKVPWPGDFGTTTKENSGSGPLEERPRENGDALTREGSLGPLPGPSTQPHKGILKKKCLPTISEKSSLLRLPLEQGTGSSRGSTASEGSRNGPPPRPPPRQSLQEQLNGVMPIAMSIKAGTVDEDSSGSEFLFFNFLH.

4 Cadherin domains span residues 1 to 40 (EDQV…APQF), 41 to 146 (LRDS…PPVF), 147 to 248 (EQDE…PPVL), and 253 to 371 (ILFN…SPLL). Residues 1 to 1605 (EDQVSYTLAI…GEILPLKTLT (1605 aa)) lie on the Extracellular side of the membrane. N261, N301, N407, and N437 each carry an N-linked (GlcNAc...) asparagine glycan. Residues 453–511 (DDNICLREPCENYMRCVSVLRFDSSAPFIASSSVLFRPIHPVGGLRCRCPPGFTGDYCE) enclose the EGF-like 1; calcium-binding domain. 9 cysteine pairs are disulfide-bonded: C457/C468, C462/C499, C501/C510, C517/C528, C522/C537, C539/C548, C557/C568, C562/C578, and C580/C590. In terms of domain architecture, EGF-like 2; calcium-binding spans 513–549 (EVDLCYSRPCGPHGHCRSREGGYTCLCRDGYTGEHCE). The EGF-like 3; calcium-binding domain occupies 553-591 (RSGRCTPGVCKNGGTCVNLLVGGFKCDCPSGDFEKPFCQ). The Laminin G-like 1 domain maps to 592 to 796 (VTTRSFPARS…IANNGTVPGC (205 aa)). N-linked (GlcNAc...) asparagine glycosylation is found at N726 and N790. 4 disulfide bridges follow: C770-C796, C803-C814, C808-C823, and C825-C834. The EGF-like 4; calcium-binding domain occupies 799-835 (KKNVCDSNTCHNGGTCVNQWDAFSCECPLGFGGKSCA). N816 carries the post-translational modification (3R)-3-hydroxyasparagine. The region spanning 839–1016 (ANPQRFLGSS…GESINVEPGC (178 aa)) is the Laminin G-like 2 domain. Residue N966 is glycosylated (N-linked (GlcNAc...) asparagine). 14 disulfides stabilise this stretch: C986–C1016, C1022–C1033, C1027–C1042, C1044–C1053, C1057–C1068, C1062–C1080, C1082–C1091, C1112–C1124, C1114–C1131, C1133–C1146, C1149–C1161, C1151–C1168, C1170–C1179, and C1182–C1194. The region spanning 1018 to 1053 (WPDPCDSNPCPTNSYCSNDWDSYSCSCDPGYYGDNC) is the EGF-like 5; calcium-binding domain. N1035 is subject to (3R)-3-hydroxyasparagine. N1052 carries an N-linked (GlcNAc...) asparagine glycan. The region spanning 1054 to 1092 (TNVCDLNPCEHQSACTRKPSAPHGYICECLPNYLGPYCE) is the EGF-like 6; calcium-binding domain. The EGF-like 7; calcium-binding domain occupies 1108–1147 (TCGPCNCDVSKGFDPDCNKTSGECHCKENHYRPPSSPTCL). N-linked (GlcNAc...) asparagine glycosylation is present at N1125. Positions 1149–1196 (CDCYPTGSLSRVCDPEDGQCPCKPGVIGRQCDRCDNPFAEVTTNGCEV) constitute a Laminin EGF-like domain. N1249, N1268, and N1286 each carry an N-linked (GlcNAc...) asparagine glycan. Residues 1424-1594 (ETTVILPESV…AVLMDVSRRE (171 aa)) form the GAIN-B domain. A disordered region spans residues 1439-1466 (PMVRSAGPGEAQETEELARRQRRHPELS). 2 disulfide bridges follow: C1544–C1576 and C1564–C1578. Positions 1544-1594 (CVFWNHSILVSGTGGWSARGCEVVFRNESHVSCQCNHMTSFAVLMDVSRRE) are GPS. 2 N-linked (GlcNAc...) asparagine glycosylation sites follow: N1548 and N1570. Residues 1606-1626 (YVALGVTLAALMITFLFLTLL) traverse the membrane as a helical segment. Residues 1627-1641 (RALRSNQHGIRRNLT) lie on the Cytoplasmic side of the membrane. A helical transmembrane segment spans residues 1642–1662 (AALGLAQLVFLLGINQADLPF). Position 1663 (A1663) is a topological domain, extracellular. A helical transmembrane segment spans residues 1664 to 1684 (CTVIAILLHFLYLCTFSWALL). Residues 1685–1705 (EALHLYRALTEVRDVNASPMR) are Cytoplasmic-facing. Residues 1706–1726 (FYYMLGWGVPAFITGLAVGLD) traverse the membrane as a helical segment. Topologically, residues 1727-1744 (PEGYGNPDFCWLSIYDTL) are extracellular. A helical membrane pass occupies residues 1745–1765 (IWSFAGPVAFAVSMSVFLYIL). Over 1766–1789 (SARASCAAQRQGFEKKGPVSGLRS) the chain is Cytoplasmic. The helical transmembrane segment at 1790 to 1810 (SFTVLLLLSATWLLALLSVNS) threads the bilayer. Residues 1811–1816 (DTLLFH) are Extracellular-facing. The chain crosses the membrane as a helical span at residues 1817 to 1837 (YLFAACNCVQGPFIFLSYVVL). At 1838 to 2144 (SKEVRKALKF…SEFLFFNFLH (307 aa)) the chain is on the cytoplasmic side. A disordered region spans residues 1914–2109 (TLNPGQVPPG…PPRPPPRQSL (196 aa)). Positions 1943 to 1955 (TDSDSDLSLEDDQ) are enriched in acidic residues. The segment covering 2016 to 2025 (GTTTKENSGS) has biased composition (polar residues). Residues 2028–2040 (LEERPRENGDALT) show a composition bias toward basic and acidic residues. Polar residues predominate over residues 2082-2095 (GTGSSRGSTASEGS).

The protein belongs to the G-protein coupled receptor 2 family. LN-TM7 subfamily. As to quaternary structure, heterodimer of 2 chains generated by proteolytic processing; the large extracellular N-terminal fragment and the membrane-bound C-terminal fragment predominantly remain associated and non-covalently linked. The iron and 2-oxoglutarate dependent 3-hydroxylation of aspartate and asparagine is (R) stereospecific within EGF domains. Post-translationally, autoproteolytically processed at the GPS region of the GAIN-B domain; this cleavage modulates receptor activity. In terms of tissue distribution, expressed in the brain. High expression in cerebellum and olfactory bulb. Weaker expression in cerebral cortex, hippocampus and brain stem.

The protein localises to the cell membrane. Its function is as follows. Receptor that may have an important role in cell/cell signaling during nervous system formation. This is Cadherin EGF LAG seven-pass G-type receptor 2 from Rattus norvegicus (Rat).